We begin with the raw amino-acid sequence, 166 residues long: Small ribosomal subunit protein uS5 (166 aa).

The S5 DRBM domain maps to 11–74; that stretch reads LNEKLIAVNR…EKARRNMFTI (64 aa).

Belongs to the universal ribosomal protein uS5 family. In terms of assembly, part of the 30S ribosomal subunit. Contacts proteins S4 and S8.

Functionally, with S4 and S12 plays an important role in translational accuracy. Located at the back of the 30S subunit body where it stabilizes the conformation of the head with respect to the body. The chain is Small ribosomal subunit protein uS5 from Aliivibrio fischeri (strain ATCC 700601 / ES114) (Vibrio fischeri).